Reading from the N-terminus, the 360-residue chain is Mannose-1-phosphate guanyltransferase beta-A (360 aa).

Belongs to the transferase hexapeptide repeat family.

It catalyses the reaction alpha-D-mannose 1-phosphate + GTP + H(+) = GDP-alpha-D-mannose + diphosphate. It participates in nucleotide-sugar biosynthesis; GDP-alpha-D-mannose biosynthesis; GDP-alpha-D-mannose from alpha-D-mannose 1-phosphate (GTP route): step 1/1. The protein is Mannose-1-phosphate guanyltransferase beta-A (gmppb-a) of Xenopus laevis (African clawed frog).